Reading from the N-terminus, the 330-residue chain is Dof zinc finger protein DOF2.4 (330 aa).

Residues 14–25 (NWQQAPPSNYNH) show a composition bias toward polar residues. Positions 14 to 70 (NWQQAPPSNYNHDGTGASANGGHVLRPQLQPQQQPQQQPHPNGSGGGGGGGGGSIRA) are disordered. A compositionally biased stretch (low complexity) spans 40–55 (PQLQPQQQPQQQPHPN). Over residues 56-68 (GSGGGGGGGGGSI) the composition is skewed to gly residues. The Dof-type zinc finger occupies 89-143 (LKCPRCESTNTKFCYFNNYSLTQPRHFCKTCRRYWTRGGALRNVPVGGGCRRNRR). Zn(2+) contacts are provided by cysteine 91, cysteine 94, cysteine 116, and cysteine 119. Disordered stretches follow at residues 133–165 (PVGGGCRRNRRTKSNSNNNNNSTATSNNTSFSS) and 255–276 (QQSSMGGGNLEDSSNPNPSANG). The segment covering 146-165 (SNSNNNNNSTATSNNTSFSS) has biased composition (low complexity). The span at 265-276 (EDSSNPNPSANG) shows a compositional bias: polar residues.

As to expression, specific to the vascular tissues. The PEAR proteins (e.g. DOF2.4, DOF5.1, DOF3.2, DOF1.1, DOF5.6 and DOF5.3) form a short-range concentration gradient that peaks at protophloem sieve elements (PSE).

Its subcellular location is the nucleus. The protein resides in the symplast. Functionally, transcription factor that binds specifically to a 5'-AA[AG]G-3' consensus core sequence. Probably involved in early processes for vascular development. The PEAR proteins (e.g. DOF2.4, DOF5.1, DOF3.2, DOF1.1, DOF5.6 and DOF5.3) activate gene expression that promotes radial growth of protophloem sieve elements. Triggers the transcription of HD-ZIP III genes, especially in the central domain of vascular tissue. This Arabidopsis thaliana (Mouse-ear cress) protein is Dof zinc finger protein DOF2.4.